The primary structure comprises 141 residues: Hemoglobin subunit alpha (141 aa).

The 141-residue stretch at V1–R141 folds into the Globin domain. S3 is modified (phosphoserine). The residue at position 7 (K7) is an N6-succinyllysine. T8 is modified (phosphothreonine). Position 11 is an N6-succinyllysine (K11). At K16 the chain carries N6-acetyllysine; alternate. K16 bears the N6-succinyllysine; alternate mark. Residue Y24 is modified to Phosphotyrosine. S35 bears the Phosphoserine mark. K40 carries the post-translational modification N6-succinyllysine. At S49 the chain carries Phosphoserine. H58 provides a ligand contact to O2. H87 is a heme b binding site. A Phosphoserine modification is found at S102. Phosphothreonine is present on T108. A phosphoserine mark is found at S124 and S131. Residues T134 and T137 each carry the phosphothreonine modification. S138 is modified (phosphoserine).

Belongs to the globin family. In terms of assembly, heterotetramer of two alpha chains and two beta chains. In terms of tissue distribution, red blood cells.

In terms of biological role, involved in oxygen transport from the lung to the various peripheral tissues. Functionally, hemopressin acts as an antagonist peptide of the cannabinoid receptor CNR1. Hemopressin-binding efficiently blocks cannabinoid receptor CNR1 and subsequent signaling. This chain is Hemoglobin subunit alpha (HBA), found in Taphozous georgianus (Sharp-nosed tomb bat).